Consider the following 144-residue polypeptide: Large ribosomal subunit protein uL15 (144 aa).

Residues 1–58 (MHLNTLSPAPGSHKARKRCGRGIGSGIGKTGGRGHKGQKSRSGGSVRPGFEGGQMPLK) are disordered. Residues 21–31 (RGIGSGIGKTG) are compositionally biased toward gly residues.

The protein belongs to the universal ribosomal protein uL15 family. As to quaternary structure, part of the 50S ribosomal subunit.

Binds to the 23S rRNA. In Colwellia psychrerythraea (strain 34H / ATCC BAA-681) (Vibrio psychroerythus), this protein is Large ribosomal subunit protein uL15.